The chain runs to 492 residues: MKIEMKNISKSFGTNKVLEAIDLPINSGEVHALMGENGAGKSTLMNILTGLFPASGGEIEIDKEDKTFKNPQEAEGFGISFIHQEMNTWPDLTVLENLFLGREIKNKFGVLDTKAMRKKATFAFEQLGVTIDLDKEIGNLSVGQQQMVEIAKSFLSDLKILIMDEPTAALTERETERLFSVIAGLKAQGVGIIYISHRMEEIFKITDCVTVMRDGLVIDTKKTKETNVDELVRKMVGRSITDYYPQKNAEIREIVFEAENLSTADFKNISFSVRSGEILGFAGLMGAGRTEVMRAIFGIDKLKSGTIKINGKSLTINNPAQAIKAGIGFLTEDRKDEGLVLDFSIKDNITLPSTKDFIHHGLFDDKTATTFVKQLSERLNVKATDEEQMVGSLSGGNQQKVVLAKWIGIAPKVLILDEPTRGVDVGAKREIYQLMNELAERGVPIIMISSDLPEILGVADRIAVMHEGKIAGFLNKKEATQENVMQLATGGK.

2 consecutive ABC transporter domains span residues 3–239 and 249–492; these read IEMK…VGRS and AEIR…TGGK. 35–42 contributes to the ATP binding site; that stretch reads GENGAGKS.

It belongs to the ABC transporter superfamily. Ribose importer (TC 3.A.1.2.1) family. In terms of assembly, the complex is composed of an ATP-binding protein (RbsA), two transmembrane proteins (RbsC) and a solute-binding protein (RbsB).

The protein resides in the cell membrane. It catalyses the reaction D-ribose(out) + ATP + H2O = D-ribose(in) + ADP + phosphate + H(+). Its function is as follows. Part of the ABC transporter complex RbsABC involved in ribose import. Responsible for energy coupling to the transport system. This is Ribose import ATP-binding protein RbsA from Lactococcus lactis subsp. cremoris (strain SK11).